Here is a 330-residue protein sequence, read N- to C-terminus: Putative quinone oxidoreductase YhfP (330 aa).

Residues Tyr-45, 160-163 (TGGV), 182-184 (TGN), Arg-202, Leu-248, Ile-262, Ser-273, and Asn-320 each bind NADP(+).

This sequence belongs to the zinc-containing alcohol dehydrogenase family. Quinone oxidoreductase subfamily. Homodimer, or homotetramer.

The protein resides in the cytoplasm. This Bacillus subtilis (strain 168) protein is Putative quinone oxidoreductase YhfP (yhfP).